Reading from the N-terminus, the 204-residue chain is Ribosomal RNA small subunit methyltransferase J (204 aa).

Residues 55–56 (RD), 71–72 (ER), and Asp-123 contribute to the S-adenosyl-L-methionine site.

It belongs to the methyltransferase superfamily. RsmJ family.

It localises to the cytoplasm. It catalyses the reaction guanosine(1516) in 16S rRNA + S-adenosyl-L-methionine = N(2)-methylguanosine(1516) in 16S rRNA + S-adenosyl-L-homocysteine + H(+). Functionally, specifically methylates the guanosine in position 1516 of 16S rRNA. The sequence is that of Ribosomal RNA small subunit methyltransferase J from Rhodopseudomonas palustris (strain TIE-1).